We begin with the raw amino-acid sequence, 294 residues long: Nucleotide-binding protein Dtur_1129 (294 aa).

An ATP-binding site is contributed by 10 to 17 (GLSGAGKS). 61 to 64 (DIRT) contributes to the GTP binding site.

This sequence belongs to the RapZ-like family.

Its function is as follows. Displays ATPase and GTPase activities. The sequence is that of Nucleotide-binding protein Dtur_1129 from Dictyoglomus turgidum (strain DSM 6724 / Z-1310).